A 1029-amino-acid polypeptide reads, in one-letter code: Beta-galactosidase (1029 aa).

Residues N108 and D207 each coordinate substrate. D207 serves as a coordination point for Na(+). Mg(2+)-binding residues include E422, H424, and E467. Substrate is bound by residues E467 and 543–546 (EYAH). The active-site Proton donor is E467. E543 functions as the Nucleophile in the catalytic mechanism. N603 serves as a coordination point for Mg(2+). Residues F607 and N610 each contribute to the Na(+) site. N610 and W1005 together coordinate substrate.

Belongs to the glycosyl hydrolase 2 family. Homotetramer. The cofactor is Mg(2+). It depends on Na(+) as a cofactor.

The enzyme catalyses Hydrolysis of terminal non-reducing beta-D-galactose residues in beta-D-galactosides.. The sequence is that of Beta-galactosidase from Escherichia coli.